We begin with the raw amino-acid sequence, 346 residues long: MNPIIFTTILLTIMLGTNNVMISSHWLLVWIGFEMNMLAIIPIMMKNHNPRATEASTKYFLTQSTASMLLMMAVIINLMFSGQWTVMKLFNPMASMLMTMALAMKLGMAPFHFWVPEVTQGIPLSSGLILLTWQKLAPMSVLYQIFPSINLNLILTLSILSILIGGWGGLNQTQLRKIMAYSSIAHMGWMTASLHTPYYTLLNLIIYITMTSTMFTMFMANSTTTTLSLSHTWNKTPIMTILILATLLSMGGLPPLSGFMPKWMIIQEMTKNNSIILPTFMAITALLNLYFYMRLTYSTALTMFPSTNNMKMKWQFPLMKKMTFLPTMVVLSTMTLPLTPMLSVLE.

A run of 10 helical transmembrane segments spans residues 3–23 (PIIFTTILLTIMLGTNNVMIS), 25–45 (HWLLVWIGFEMNMLAIIPIMM), 67–87 (SMLLMMAVIINLMFSGQWTVM), 96–116 (MLMTMALAMKLGMAPFHFWVP), 122–142 (IPLSSGLILLTWQKLAPMSVL), 145–165 (IFPSINLNLILTLSILSILIG), 200–220 (TLLNLIIYITMTSTMFTMFMA), 238–258 (IMTILILATLLSMGGLPPLSG), 273–293 (NSIILPTFMAITALLNLYFYM), and 324–344 (FLPTMVVLSTMTLPLTPMLSV).

It belongs to the complex I subunit 2 family. Core subunit of respiratory chain NADH dehydrogenase (Complex I) which is composed of 45 different subunits. Interacts with TMEM242.

Its subcellular location is the mitochondrion inner membrane. It catalyses the reaction a ubiquinone + NADH + 5 H(+)(in) = a ubiquinol + NAD(+) + 4 H(+)(out). In terms of biological role, core subunit of the mitochondrial membrane respiratory chain NADH dehydrogenase (Complex I) which catalyzes electron transfer from NADH through the respiratory chain, using ubiquinone as an electron acceptor. Essential for the catalytic activity and assembly of complex I. This is NADH-ubiquinone oxidoreductase chain 2 from Bos mutus grunniens (Wild yak).